Here is a 253-residue protein sequence, read N- to C-terminus: Small ribosomal subunit protein uS2 (253 aa).

Residues 226–253 (QGADNADVEKELSESVEENSAEEVDDAE) are disordered. Over residues 239-253 (ESVEENSAEEVDDAE) the composition is skewed to acidic residues.

This sequence belongs to the universal ribosomal protein uS2 family.

The sequence is that of Small ribosomal subunit protein uS2 from Lactobacillus delbrueckii subsp. bulgaricus (strain ATCC 11842 / DSM 20081 / BCRC 10696 / JCM 1002 / NBRC 13953 / NCIMB 11778 / NCTC 12712 / WDCM 00102 / Lb 14).